The chain runs to 428 residues: Serine--tRNA ligase (428 aa).

Position 235 to 237 (235 to 237 (TAE)) interacts with L-serine. Residue 266-268 (RSE) coordinates ATP. Glu-289 is a binding site for L-serine. 353 to 356 (EISS) lines the ATP pocket. Residue Ser-389 coordinates L-serine.

The protein belongs to the class-II aminoacyl-tRNA synthetase family. Type-1 seryl-tRNA synthetase subfamily. In terms of assembly, homodimer. The tRNA molecule binds across the dimer.

The protein localises to the cytoplasm. The catalysed reaction is tRNA(Ser) + L-serine + ATP = L-seryl-tRNA(Ser) + AMP + diphosphate + H(+). It carries out the reaction tRNA(Sec) + L-serine + ATP = L-seryl-tRNA(Sec) + AMP + diphosphate + H(+). Its pathway is aminoacyl-tRNA biosynthesis; selenocysteinyl-tRNA(Sec) biosynthesis; L-seryl-tRNA(Sec) from L-serine and tRNA(Sec): step 1/1. Its function is as follows. Catalyzes the attachment of serine to tRNA(Ser). Is also able to aminoacylate tRNA(Sec) with serine, to form the misacylated tRNA L-seryl-tRNA(Sec), which will be further converted into selenocysteinyl-tRNA(Sec). The polypeptide is Serine--tRNA ligase (Shewanella sp. (strain ANA-3)).